Consider the following 722-residue polypeptide: Probable acyl-activating enzyme 16, chloroplastic (722 aa).

Residues M1–R47 constitute a chloroplast transit peptide.

The protein belongs to the ATP-dependent AMP-binding enzyme family.

The protein localises to the plastid. It localises to the chloroplast. Functionally, may be involved in the activation of fatty acids to acyl-carrier-protein. The protein is Probable acyl-activating enzyme 16, chloroplastic (AAE16) of Arabidopsis thaliana (Mouse-ear cress).